The following is a 777-amino-acid chain: Hepatocyte growth factor-regulated tyrosine kinase substrate (777 aa).

Residues 15-143 (ATSQLLLETD…IMKVEGHVFP (129 aa)) form the VHS domain. Residues 160–220 (WVDAEECHRC…VCEPCFEQLN (61 aa)) form an FYVE-type zinc finger. Positions 166, 169, 182, 185, 190, and 193 each coordinate Zn(2+). Lys-207 bears the N6-acetyllysine mark. Zn(2+)-binding residues include Cys-212 and Cys-215. Positions 223–319 (AEGKAASTTE…SPVNSSAPLA (97 aa)) are disordered. The tract at residues 225–541 (GKAASTTELP…QRLQEQEKER (317 aa)) is interaction with SNX1. The UIM domain maps to 258–277 (QEEEELQLALALSQSEAEEK). The segment covering 292–311 (AEPTPVASSAPPASSLYSSP) has biased composition (low complexity). Residues Tyr-308, Tyr-329, and Tyr-334 each carry the phosphotyrosine modification. The segment at 338-370 (KQEEARKSPTPSAPVPLTEPTAQPGEGHAIPAN) is disordered. The interval 443–541 (SINTMHPQLL…QRLQEQEKER (99 aa)) is interaction with SNAP25 and TRAK2. An interaction with STAM region spans residues 452–570 (LELLNQLDER…FSLPYAQLQA (119 aa)). Residues 478 to 777 (ARGALSALRE…GSEAQLISFD (300 aa)) are interaction with NF2. At Lys-549 the chain carries N6-succinyllysine. Low complexity predominate over residues 645–658 (AAAQGPAGPTTSPA). Disordered stretches follow at residues 645–698 (AAAQ…YMGS) and 712–777 (NLMP…ISFD). 2 stretches are compositionally biased toward polar residues: residues 659 to 698 (YSSY…YMGS) and 730 to 739 (PYISGQQPVY). Over residues 753–777 (PPVAQQPPAQGPPAQGSEAQLISFD) the composition is skewed to low complexity.

As to quaternary structure, component of the ESCRT-0 complex composed of STAM or STAM2 and HGS. Part of a complex at least composed of HSG, STAM2 (or probably STAM) and EPS15. Interacts with STAM. Interacts with STAM2. Interacts with EPS15; the interaction is direct, calcium-dependent and inhibited by SNAP25. Identified in a complex with STAM and LITAF. Found in a complex with STAM and E3 ligase ITCH and DTX3L. Interacts with E3 ligase DTX3L; the interaction brings together STAM and HSG, promotes their recruitment to early endosomes and decreases STAM and HGS ubiquitination by ITCH. Interacts with NF2; the interaction is direct. Interacts with ubiquitin; the interaction is direct. Interacts with VPS37C. Interacts with SMAD1, SMAD2 and SMAD3. Interacts with TSG101; the interaction mediates the association with the ESCRT-I complex. Interacts with SNAP25; the interaction is direct and decreases with addition of increasing concentrations of free calcium. Interacts with SNX1; the interaction is direct. Component of a 550 kDa membrane complex at least composed of HGS and SNX1 but excluding EGFR. Interacts with TRAK1. Interacts with TRAK2. Component of the CART complex, at least composed of ACTN4, HGS/HRS, MYO5B and TRIM3. Interacts (via UIM domain) with UBQLN1 (via ubiquitin-like domain). Interacts with ARRDC3. Identified in a complex containing at least ARRDC4, AVPR2 and HGS. Interacts with LAPTM4B; promotes HGS ubiquitination. In terms of processing, phosphorylated on Tyr-334. A minor site of phosphorylation on Tyr-329 is detected. Phosphorylation occurs in response to EGF, IL-2, GM-CSF and HGF. Ubiquitinated by ITCH.

It is found in the cytoplasm. The protein resides in the early endosome membrane. Its subcellular location is the endosome. The protein localises to the multivesicular body membrane. Functionally, involved in intracellular signal transduction mediated by cytokines and growth factors. When associated with STAM it suppresses DNA signaling upon stimulation by IL-2 and GM-CSF. Could be a direct effector of PI3-kinase in vesicular pathway via early endosomes and may regulate trafficking to early and late endosomes by recruiting clathrin. May concentrate ubiquitinated receptors within clathrin-coated regions. Involved in down-regulation of receptor tyrosine kinase via multivesicular body (MVBs) when complexed with STAM (ESCRT-0 complex). The ESCRT-0 complex binds ubiquitin and acts as a sorting machinery that recognizes ubiquitinated receptors and transfers them to further sequential lysosomal sorting/trafficking processes. May contribute to the efficient recruitment of SMADs to the activin receptor complex. Involved in receptor recycling via its association with the CART complex, a multiprotein complex required for efficient transferrin receptor recycling but not for EGFR degradation. In Bos taurus (Bovine), this protein is Hepatocyte growth factor-regulated tyrosine kinase substrate (HGS).